Here is a 1067-residue protein sequence, read N- to C-terminus: Myocardin-related transcription factor B (1067 aa).

3 RPEL repeats span residues 46–71, 90–115, and 134–159; these read EVLQLRLQQRRTREQLVDQGIMPPLK, NFLKHKIRSRPNRSELVRMHILEETL, and DDLNEKIAQRPGPLELVEKNILPVDL. 2 disordered regions span residues 175–223 and 249–286; these read NLDT…NTTI and PLSCIVSKPGPALIKQTQPKHTEKPRSKKSKDPKPRVK. Composition is skewed to polar residues over residues 193 to 203 and 212 to 223; these read QPASQESQGSA and SDSSSPVSNTTI. Positions 268–283 are enriched in basic and acidic residues; it reads KHTEKPRSKKSKDPKP. The region spanning 390–424 is the SAP domain; that stretch reads LDDMKVAELKMELKLRGLPVSGTKMDLIERLKPFQ. Residues 540–594 are a coiled coil; it reads GNTPNVELDAVEKDRKLQEKEKQIEELKRKLEQEQKLVEVLKKQLELEKRGQQQQ. Positions 799 to 819 are enriched in polar residues; the sequence is ISTSAQPQRSTQLTAVQNGPT. The tract at residues 799–829 is disordered; the sequence is ISTSAQPQRSTQLTAVQNGPTSLHEKSSTPP.

In terms of assembly, interacts with SRF.

It is found in the nucleus. Poor transcriptional factor which uses the canonical single or multiple CArG boxes DNA sequence. Acts as a cofactor of serum response factor (SRF) with the potential to modulate SRF target genes. The protein is Myocardin-related transcription factor B (mrtfb) of Xenopus laevis (African clawed frog).